The primary structure comprises 201 residues: Ribosomal RNA large subunit methyltransferase E (201 aa).

S-adenosyl-L-methionine contacts are provided by Gly-49, Trp-51, Asp-69, Asp-87, and Asp-111. The Proton acceptor role is filled by Lys-151.

Belongs to the class I-like SAM-binding methyltransferase superfamily. RNA methyltransferase RlmE family.

It localises to the cytoplasm. It catalyses the reaction uridine(2552) in 23S rRNA + S-adenosyl-L-methionine = 2'-O-methyluridine(2552) in 23S rRNA + S-adenosyl-L-homocysteine + H(+). Functionally, specifically methylates the uridine in position 2552 of 23S rRNA at the 2'-O position of the ribose in the fully assembled 50S ribosomal subunit. The protein is Ribosomal RNA large subunit methyltransferase E of Nitratidesulfovibrio vulgaris (strain DSM 19637 / Miyazaki F) (Desulfovibrio vulgaris).